Consider the following 265-residue polypeptide: DNA repair protein RecO (265 aa).

This sequence belongs to the RecO family.

Functionally, involved in DNA repair and RecF pathway recombination. This is DNA repair protein RecO from Mycobacterium ulcerans (strain Agy99).